The primary structure comprises 131 residues: Transcription antitermination protein NusB (131 aa).

It belongs to the NusB family.

Its function is as follows. Involved in transcription antitermination. Required for transcription of ribosomal RNA (rRNA) genes. Binds specifically to the boxA antiterminator sequence of the ribosomal RNA (rrn) operons. The polypeptide is Transcription antitermination protein NusB (Ligilactobacillus salivarius (strain UCC118) (Lactobacillus salivarius)).